A 1025-amino-acid chain; its full sequence is Multidrug resistance protein MdtC (1025 aa).

12 helical membrane-spanning segments follow: residues 3 to 23, 333 to 353, 360 to 380, 387 to 407, 431 to 451, 463 to 483, 528 to 548, 853 to 873, 875 to 895, 897 to 917, 953 to 973, and 984 to 1004; these read FFAL…AITL, EVEQ…FLFL, IIPA…MYLC, LSLM…IVVL, VGFT…PLLL, FAVT…TLTP, LVGV…ISIP, VILI…LYES, VHPL…LLAL, LFNA…IGIV, PIMM…LSGG, and ITIV…TPVV.

This sequence belongs to the resistance-nodulation-cell division (RND) (TC 2.A.6) family. MdtC subfamily. As to quaternary structure, part of a tripartite efflux system composed of MdtA, MdtB and MdtC. MdtC forms a heteromultimer with MdtB.

It localises to the cell inner membrane. This chain is Multidrug resistance protein MdtC, found in Shigella boydii serotype 4 (strain Sb227).